Here is a 409-residue protein sequence, read N- to C-terminus: Lissencephaly-1 homolog (409 aa).

The LisH domain occupies 7–39; it reads QEEELRFAVADYLQSCGYTNALEAFKKDASIPK. Residues 56 to 81 adopt a coiled-coil conformation; sequence SVVRLQKKVMDLELRLNNTTREMNSG. The span at 75–92 shows a compositional bias: polar residues; the sequence is TREMNSGVPTRNSRSSND. Residues 75–105 form a disordered region; that stretch reads TREMNSGVPTRNSRSSNDWIPRPPEKHSLSG. WD repeat units lie at residues 105–146, 147–186, 189–228, 231–270, 273–332, 335–374, and 377–409; these read GHRS…RTLR, GHTD…CRMT, GHDH…CVYN, GHRE…CKEE, GHEH…CLFS, GHDN…CSKS, and AHNH…WECR.

It belongs to the WD repeat LIS1/nudF family.

The protein localises to the cytoplasm. It is found in the cytoskeleton. Its subcellular location is the microtubule organizing center. It localises to the centrosome. Its function is as follows. Positively regulates the activity of the minus-end directed microtubule motor protein dynein. May enhance dynein-mediated microtubule sliding by targeting dynein to the microtubule plus end. Required for several dynein- and microtubule-dependent processes. This is Lissencephaly-1 homolog from Trichoplax adhaerens (Trichoplax reptans).